A 218-amino-acid chain; its full sequence is Ribonuclease HII (218 aa).

The region spanning 13 to 202 is the RNase H type-2 domain; it reads DLVAGVDEVG…VRAAHEARAT (190 aa). A divalent metal cation-binding residues include Asp19, Glu20, and Asp111.

This sequence belongs to the RNase HII family. Mn(2+) is required as a cofactor. It depends on Mg(2+) as a cofactor.

The protein resides in the cytoplasm. The enzyme catalyses Endonucleolytic cleavage to 5'-phosphomonoester.. Endonuclease that specifically degrades the RNA of RNA-DNA hybrids. The chain is Ribonuclease HII from Pseudomonas syringae pv. syringae (strain B728a).